Consider the following 71-residue polypeptide: Protein CYSTEINE-RICH TRANSMEMBRANE MODULE 4 (71 aa).

Over residues M1–A12 the composition is skewed to polar residues. Residues M1 to Y31 form a disordered region. The segment covering P14–G30 has biased composition (pro residues). The chain crosses the membrane as a helical span at residues S48–C64.

The protein belongs to the CYSTM1 family. As to quaternary structure, heterodimers. Interacts with CYSTM6, CYSTM7, CYSTM12 and WIH1/CYSTM13. In terms of tissue distribution, mostly expressed in roots, stems, rosette leaves and siliques and, to a lower extent, in flowers and cauline leaves.

It localises to the cell membrane. Its subcellular location is the cytoplasm. Involved in resistance to abiotic stress. In Arabidopsis thaliana (Mouse-ear cress), this protein is Protein CYSTEINE-RICH TRANSMEMBRANE MODULE 4.